The sequence spans 575 residues: Probable ferredoxin/ferredoxin--NADP reductase (575 aa).

4Fe-4S ferredoxin-type domains are found at residues 2–29 (PHVI…PTPD) and 37–66 (EMLY…PNTR). 7 residues coordinate [4Fe-4S] cluster: Cys-9, Cys-15, Cys-19, Cys-46, Cys-49, Cys-52, and Cys-56. Residues 115 to 575 (VAVVGSGPAA…GQPIVLTVPL (461 aa)) are ferredoxin--NADP reductase. The FAD site is built by Ala-123, Glu-143, Leu-151, and Ile-187. NADP(+)-binding positions include Arg-213, 258-261 (NGNV), 302-303 (RR), and Glu-314. FAD contacts are provided by residues Trp-456 and 463-465 (GFI). Residue Gly-463 coordinates NADP(+).

The protein in the C-terminal section; belongs to the ferredoxin--NADP reductase family. It depends on [4Fe-4S] cluster as a cofactor. The cofactor is FAD.

The catalysed reaction is 2 reduced [2Fe-2S]-[ferredoxin] + NADP(+) + H(+) = 2 oxidized [2Fe-2S]-[ferredoxin] + NADPH. The chain is Probable ferredoxin/ferredoxin--NADP reductase (fprB) from Mycobacterium bovis (strain ATCC BAA-935 / AF2122/97).